A 420-amino-acid polypeptide reads, in one-letter code: Transcription termination factor Rho (420 aa).

The 76-residue stretch at 49 to 124 folds into the Rho RNA-BD domain; the sequence is DIFGGGVLEI…LKVDQVNDDK (76 aa). Residues 170–175, 182–187, and R213 contribute to the ATP site; these read GKGQRG and KAGKTM.

It belongs to the Rho family. Homohexamer. The homohexamer assembles into an open ring structure.

Facilitates transcription termination by a mechanism that involves Rho binding to the nascent RNA, activation of Rho's RNA-dependent ATPase activity, and release of the mRNA from the DNA template. This Haemophilus influenzae (strain ATCC 51907 / DSM 11121 / KW20 / Rd) protein is Transcription termination factor Rho.